The following is a 396-amino-acid chain: MIISAASDYRAAAQRTLPPFLFHYIDGGAYAEYTLRRNVEDLSQVALRQRVLKNMSDLSLETTLFNETLSMPVALAPVGLCGMYARRGEVQAAAAADAKGIPFTLSTVSVCPIEEVAPTLKRPMWFQLYVLRDRGFMRNALERAKAAGCSTLVFTVDMPTPGARYRDAHSGMSGPNAAMRRYWQAVMHPKWAWDVGLNGRPHDLGNISAYLGKPTGLEDYIGWLANNFDPSISWKDLEWIREFWDGPMVIKGILDPEDARDAVRFGADGIVVSNHGGRQLDGVLSSARALPAIADAVKGDIAILADSGIRNGLDVVRMIALGADTVLLGRAYLYALATAGKAGVANLLDLIEKEMKVAMTLTGAKSISEISGDSLVQELGKSLPAALAPMSKGDAT.

Residues 1-380 (MIISAASDYR…SGDSLVQELG (380 aa)) form the FMN hydroxy acid dehydrogenase domain. Tyr24 is a binding site for substrate. Positions 106 and 127 each coordinate FMN. Tyr129 is a binding site for substrate. Thr155 serves as a coordination point for FMN. Arg164 provides a ligand contact to substrate. Lys251 serves as a coordination point for FMN. His275 functions as the Proton acceptor in the catalytic mechanism. Arg278 is a binding site for substrate. Residue 306–330 (DSGIRNGLDVVRMIALGADTVLLGR) coordinates FMN.

Belongs to the FMN-dependent alpha-hydroxy acid dehydrogenase family. FMN serves as cofactor.

The protein localises to the cell inner membrane. It catalyses the reaction (S)-lactate + A = pyruvate + AH2. Its function is as follows. Catalyzes the conversion of L-lactate to pyruvate. Is coupled to the respiratory chain. The protein is L-lactate dehydrogenase of Salmonella arizonae (strain ATCC BAA-731 / CDC346-86 / RSK2980).